A 244-amino-acid polypeptide reads, in one-letter code: Non-structural protein 3 (244 aa).

Belongs to the aquareoviridae NS3 protein family.

The protein is Non-structural protein 3 (S11) of Notemigonus crysoleucas (Golden shiner).